The following is a 456-amino-acid chain: tRNA modification GTPase MnmE (456 aa).

(6S)-5-formyl-5,6,7,8-tetrahydrofolate-binding residues include arginine 24, glutamate 81, and lysine 120. In terms of domain architecture, TrmE-type G spans 216 to 379 (GMTVVIAGRP…LRDHLKACMG (164 aa)). Asparagine 226 contacts K(+). Residues 226-231 (NAGKSS), 245-251 (TDIAGTT), 270-273 (DTAG), 335-338 (NKAD), and 359-361 (SAR) contribute to the GTP site. Mg(2+) is bound at residue serine 230. K(+)-binding residues include threonine 245, isoleucine 247, and threonine 250. Threonine 251 is a Mg(2+) binding site. (6S)-5-formyl-5,6,7,8-tetrahydrofolate is bound at residue lysine 456.

Belongs to the TRAFAC class TrmE-Era-EngA-EngB-Septin-like GTPase superfamily. TrmE GTPase family. As to quaternary structure, homodimer. Heterotetramer of two MnmE and two MnmG subunits. K(+) serves as cofactor.

The protein resides in the cytoplasm. Exhibits a very high intrinsic GTPase hydrolysis rate. Involved in the addition of a carboxymethylaminomethyl (cmnm) group at the wobble position (U34) of certain tRNAs, forming tRNA-cmnm(5)s(2)U34. In Pseudomonas entomophila (strain L48), this protein is tRNA modification GTPase MnmE.